Reading from the N-terminus, the 910-residue chain is Disease resistance protein RPH8A (910 aa).

The stretch at 15–57 forms a coiled coil; sequence DLLSRESERLQGIDEQLDGLKRQLRSLQSLLKDADAKKHGSDR. The region spanning 146-459 is the NB-ARC domain; sequence RQRVQREIRQ…AEGIYDGSTI (314 aa). 192–199 is an ATP binding site; sequence GMGGIGKT.

Belongs to the disease resistance NB-LRR family. RPP8/HRT subfamily.

In terms of biological role, disease resistance protein. Resistance proteins guard the plant against pathogens that contain an appropriate avirulence protein via an indirect interaction with this avirulence protein. That triggers a defense system including the hypersensitive response, which restricts the pathogen growth. In contrast to RPP8, it does not specifically recognize the Emco5 avirulence protein from Hyaloperonospora parasitica. The sequence is that of Disease resistance protein RPH8A (RPH8A) from Arabidopsis thaliana (Mouse-ear cress).